A 288-amino-acid chain; its full sequence is Threonine-rich protein (288 aa).

Positions 1-20 (MKAFLLSLATLLACIVLTES) are cleaved as a signal peptide. The segment covering 141–150 (TTVTPQTTDG) has biased composition (polar residues). Positions 141 to 260 (TTVTPQTTDG…PAPTTTPAPT (120 aa)) are disordered. Over residues 151–253 (NTTTEAPTST…TAAPTTTPAP (103 aa)) the composition is skewed to low complexity.

Component of the acid-insoluble and acid-soluble organic matrix of the aragonitic skeleton (at protein level).

It localises to the secreted. The protein is Threonine-rich protein of Acropora millepora (Staghorn coral).